Consider the following 510-residue polypeptide: Cytochrome P450 90D2 (510 aa).

A helical transmembrane segment spans residues 6-26 (MVGSGGVYSWPAALLVAAIVV). Cysteine 444 is a binding site for heme.

It belongs to the cytochrome P450 family. Requires heme as cofactor.

It localises to the membrane. It catalyses the reaction 3-epi-6-deoxocathasterone + reduced [NADPH--hemoprotein reductase] + O2 = 6-deoxotyphasterol + oxidized [NADPH--hemoprotein reductase] + H2O + H(+). It carries out the reaction (22S,24R)-22-hydroxy-5alpha-ergostan-3-one + reduced [NADPH--hemoprotein reductase] + O2 = 3-dehydro-6-deoxoteasterone + oxidized [NADPH--hemoprotein reductase] + H2O + H(+). The enzyme catalyses 6-deoxycathasterone + reduced [NADPH--hemoprotein reductase] + O2 = 6-deoxoteasterone + oxidized [NADPH--hemoprotein reductase] + H2O + H(+). The protein operates within plant hormone biosynthesis; brassinosteroid biosynthesis. Involved in reduction steps of the biosynthesis of plant campesterol-derivative steroids, ending to castasterone (CS) but missing brassinolide (BL). Catalyzes the conversion of (22S,24R)-22-hydroxy-5alpha-ergostan-3-one (22-hydroxy-campesta-3-one, 22-OH-3-one) to 3-dehydro-6-deoxoteasterone (6-deoxo3DT, 6-deoxo-3-DHT), 3-epi-6-deoxocathasterone (3-epi-6-deoxoCT) to 6-deoxotyphasterol (6-deoxoTY) and of 6-deoxocathasterone (6-deoxoCT) to 6-deoxoteasterone (6-deoxoTE). This chain is Cytochrome P450 90D2, found in Brachypodium distachyon (Purple false brome).